The primary structure comprises 313 residues: Dehydrogenase/reductase SDR family member 1 (313 aa).

Ile19 provides a ligand contact to NAD(+). Arg21 is modified (omega-N-methylarginine). An NAD(+)-binding site is contributed by Asp64. Residue Ser151 coordinates substrate. Tyr163, Lys167, and Thr198 together coordinate NAD(+). Tyr163 serves as the catalytic Proton acceptor.

The protein belongs to the short-chain dehydrogenases/reductases (SDR) family.

It is found in the endoplasmic reticulum. It catalyses the reaction 17alpha-estradiol + NADP(+) = estrone + NADPH + H(+). The enzyme catalyses testosterone + NADP(+) = androst-4-ene-3,17-dione + NADPH + H(+). It carries out the reaction prostaglandin E1 + NADPH + H(+) = prostaglandin F1 + NADP(+). The catalysed reaction is isatin + NADPH + H(+) = 3-hydroxyindolin-2-one + NADP(+). Its function is as follows. NADPH-dependent oxidoreductase which catalyzes the reduction of some steroids (estrone, androstene-3,17-dione and cortisone) as well as prostaglandin E1, isatin and xenobiotics in vitro. May have a role in steroid and/or xenobiotic metabolism. This Mus musculus (Mouse) protein is Dehydrogenase/reductase SDR family member 1.